A 166-amino-acid chain; its full sequence is Endoribonuclease YbeY (166 aa).

The Zn(2+) site is built by His-111, His-115, and His-121. The segment at 141 to 166 is disordered; that stretch reads LGYPDPYAEDESADHPHSDTPSKDHE. Positions 153–166 are enriched in basic and acidic residues; the sequence is ADHPHSDTPSKDHE.

This sequence belongs to the endoribonuclease YbeY family. Zn(2+) serves as cofactor.

Its subcellular location is the cytoplasm. In terms of biological role, single strand-specific metallo-endoribonuclease involved in late-stage 70S ribosome quality control and in maturation of the 3' terminus of the 16S rRNA. The polypeptide is Endoribonuclease YbeY (Pseudomonas savastanoi pv. phaseolicola (strain 1448A / Race 6) (Pseudomonas syringae pv. phaseolicola (strain 1448A / Race 6))).